A 153-amino-acid polypeptide reads, in one-letter code: MRCPFCAHDDSQVKDSRPAEDNAAIRRRRQCSKCGARFTTFERVQLRDVTVVKSDDKREAFDRSKLEQSVTLACRKRGVTQEQIDQLVSGIQRQVETAGEGEIASTRIGEMVMDGLRQIDSVAYIRFASVYRDFSEARDFEEFASTVQEAAKD.

The segment at 3-34 (CPFCAHDDSQVKDSRPAEDNAAIRRRRQCSKC) is a zinc-finger region. Residues 49–139 (VTVVKSDDKR…VYRDFSEARD (91 aa)) form the ATP-cone domain.

It belongs to the NrdR family. The cofactor is Zn(2+).

In terms of biological role, negatively regulates transcription of bacterial ribonucleotide reductase nrd genes and operons by binding to NrdR-boxes. The polypeptide is Transcriptional repressor NrdR (Erythrobacter litoralis (strain HTCC2594)).